We begin with the raw amino-acid sequence, 257 residues long: NAD-capped RNA hydrolase NudC (257 aa).

A substrate-binding site is contributed by Arg69. Residues Cys98 and Cys101 each contribute to the Zn(2+) site. Glu111 provides a ligand contact to substrate. Positions 116 and 119 each coordinate Zn(2+). Tyr124 serves as a coordination point for substrate. The region spanning 125-248 (PQIAPCIIVA…TVARRLIEDT (124 aa)) is the Nudix hydrolase domain. Residues Ala158, Glu174, and Glu178 each contribute to the a divalent metal cation site. The short motif at 159–180 (GFVEVGETLEQAVAREVMEESG) is the Nudix box element. 192–199 (QPWPFPQS) lines the substrate pocket. Glu219 contacts a divalent metal cation. Ala241 contacts substrate.

The protein belongs to the Nudix hydrolase family. NudC subfamily. In terms of assembly, homodimer. The cofactor is Mg(2+). Mn(2+) is required as a cofactor. Zn(2+) serves as cofactor.

It catalyses the reaction a 5'-end NAD(+)-phospho-ribonucleoside in mRNA + H2O = a 5'-end phospho-adenosine-phospho-ribonucleoside in mRNA + beta-nicotinamide D-ribonucleotide + 2 H(+). It carries out the reaction NAD(+) + H2O = beta-nicotinamide D-ribonucleotide + AMP + 2 H(+). The catalysed reaction is NADH + H2O = reduced beta-nicotinamide D-ribonucleotide + AMP + 2 H(+). Functionally, mRNA decapping enzyme that specifically removes the nicotinamide adenine dinucleotide (NAD) cap from a subset of mRNAs by hydrolyzing the diphosphate linkage to produce nicotinamide mononucleotide (NMN) and 5' monophosphate mRNA. The NAD-cap is present at the 5'-end of some mRNAs and stabilizes RNA against 5'-processing. Has preference for mRNAs with a 5'-end purine. Catalyzes the hydrolysis of a broad range of dinucleotide pyrophosphates. This chain is NAD-capped RNA hydrolase NudC, found in Citrobacter koseri (strain ATCC BAA-895 / CDC 4225-83 / SGSC4696).